The primary structure comprises 197 residues: MADDVIDWLPYVDTLDQRYLNEVEKTVTAELAAIEQQELHPRIAELFPAVRHHWDEQYGLYKDNVVGLEGSNKRAAEDGVLSELKRRCPGIDISVYNDDSEDPVLLATIAGYRYHQDLVVTQLLPQTLENQWAINNAYLEGAEAAVRRQLQEQEQQIAQLDRHRQELQQREALRFRYLERQWRDRLHGNLERAAGNI.

As to quaternary structure, associated with the spliceosome.

It localises to the nucleus. Functionally, involved in pre-mRNA splicing. The protein is Pre-mRNA-splicing factor SNT309 (SNT309) of Eremothecium gossypii (strain ATCC 10895 / CBS 109.51 / FGSC 9923 / NRRL Y-1056) (Yeast).